The following is a 264-amino-acid chain: Glutamate racemase (264 aa).

Substrate-binding positions include 10–11 and 42–43; these read DS and YG. Cys-73 functions as the Proton donor/acceptor in the catalytic mechanism. 74–75 contacts substrate; sequence NT. The Proton donor/acceptor role is filled by Cys-183. Residue 184 to 185 coordinates substrate; the sequence is TH.

This sequence belongs to the aspartate/glutamate racemases family.

The enzyme catalyses L-glutamate = D-glutamate. The protein operates within cell wall biogenesis; peptidoglycan biosynthesis. Provides the (R)-glutamate required for cell wall biosynthesis. The sequence is that of Glutamate racemase from Streptococcus pyogenes serotype M6 (strain ATCC BAA-946 / MGAS10394).